A 235-amino-acid polypeptide reads, in one-letter code: Adenosine 5'-phosphosulfate reductase (235 aa).

[4Fe-4S] cluster-binding residues include Cys-121, Cys-122, Cys-204, and Cys-207. Cys-230 (nucleophile; cysteine thiosulfonate intermediate) is an active-site residue.

Belongs to the PAPS reductase family. CysH subfamily. It depends on [4Fe-4S] cluster as a cofactor.

Its subcellular location is the cytoplasm. It carries out the reaction [thioredoxin]-disulfide + sulfite + AMP + 2 H(+) = adenosine 5'-phosphosulfate + [thioredoxin]-dithiol. The protein operates within sulfur metabolism; hydrogen sulfide biosynthesis; sulfite from sulfate. In terms of biological role, catalyzes the formation of sulfite from adenosine 5'-phosphosulfate (APS) using thioredoxin as an electron donor. This is Adenosine 5'-phosphosulfate reductase from Geobacillus thermodenitrificans (strain NG80-2).